A 693-amino-acid polypeptide reads, in one-letter code: Probable L-type lectin-domain containing receptor kinase VI.1 (693 aa).

A signal peptide spans 1-22 (MGIARSINSFMFFFFLMILSNA). 7 N-linked (GlcNAc...) asparagine glycosylation sites follow: asparagine 21, asparagine 44, asparagine 71, asparagine 89, asparagine 141, asparagine 180, and asparagine 223. Residues 23–311 (SKSSVLAEAT…SNKKGYNSQV (289 aa)) lie on the Extracellular side of the membrane. The legume-lectin like stretch occupies residues 33-279 (TAKFTFIGFK…AHYVMGWSFS (247 aa)). A helical membrane pass occupies residues 312–332 (IVLIVALSIVTLVLLVLLFIF). Residues 333–693 (VMYKRRIQEE…VSSSSIVSGR (361 aa)) are Cytoplasmic-facing. The Protein kinase domain maps to 368 to 642 (FKESEIIGTG…LRYLNGEENV (275 aa)). ATP is bound by residues 374-382 (IGTGGFGIV) and lysine 396. Aspartate 495 serves as the catalytic Proton acceptor. The interval 670-693 (DRASSSNTFSSFSNVSSSSIVSGR) is disordered.

The protein in the C-terminal section; belongs to the protein kinase superfamily. Ser/Thr protein kinase family. It in the N-terminal section; belongs to the leguminous lectin family.

Its subcellular location is the cell membrane. The enzyme catalyses L-seryl-[protein] + ATP = O-phospho-L-seryl-[protein] + ADP + H(+). It carries out the reaction L-threonyl-[protein] + ATP = O-phospho-L-threonyl-[protein] + ADP + H(+). This Arabidopsis thaliana (Mouse-ear cress) protein is Probable L-type lectin-domain containing receptor kinase VI.1 (LECRK61).